The chain runs to 466 residues: Chromosomal replication initiator protein DnaA (466 aa).

The interval 1–77 is domain I, interacts with DnaA modulators; it reads MSQEIWADVL…GAEHPQVEFQ (77 aa). Residues 77 to 121 are domain II; that stretch reads QVLPAAQDALLLPNDPPPAPEAAAPTPKTKAAPTPPPSTPGDNRK. The disordered stretch occupies residues 87-122; the sequence is LLPNDPPPAPEAAAPTPKTKAAPTPPPSTPGDNRKT. Residues 97-108 are compositionally biased toward low complexity; it reads EAAAPTPKTKAA. Residues 122–338 are domain III, AAA+ region; sequence TLNPKYTFEN…GALMRVVAFA (217 aa). ATP-binding residues include Gly-166, Gly-168, Lys-169, and Thr-170. The tract at residues 339-466 is domain IV, binds dsDNA; it reads SLNNVPFSRA…GKEEEEEVGA (128 aa).

This sequence belongs to the DnaA family. As to quaternary structure, oligomerizes as a right-handed, spiral filament on DNA at oriC.

The protein resides in the cytoplasm. Its function is as follows. Plays an essential role in the initiation and regulation of chromosomal replication. ATP-DnaA binds to the origin of replication (oriC) to initiate formation of the DNA replication initiation complex once per cell cycle. Binds the DnaA box (a 9 base pair repeat at the origin) and separates the double-stranded (ds)DNA. Forms a right-handed helical filament on oriC DNA; dsDNA binds to the exterior of the filament while single-stranded (ss)DNA is stabiized in the filament's interior. The ATP-DnaA-oriC complex binds and stabilizes one strand of the AT-rich DNA unwinding element (DUE), permitting loading of DNA polymerase. After initiation quickly degrades to an ADP-DnaA complex that is not apt for DNA replication. Binds acidic phospholipids. Functionally, strand separation requires the DnaA boxes and adjacent DnaA-trio motifs but works equally well with ADP or ATP. The polypeptide is Chromosomal replication initiator protein DnaA (Deinococcus radiodurans (strain ATCC 13939 / DSM 20539 / JCM 16871 / CCUG 27074 / LMG 4051 / NBRC 15346 / NCIMB 9279 / VKM B-1422 / R1)).